The primary structure comprises 192 residues: Lipid A acyltransferase PagP (192 aa).

A signal peptide spans 1–26 (MTVVNKSFLTFLVFFCQILFPLNASA). Residues His64, Asp107, and Ser108 contribute to the active site.

It belongs to the lipid A palmitoyltransferase family. Homodimer.

It localises to the cell outer membrane. The enzyme catalyses a lipid A + a 1,2-diacyl-sn-glycero-3-phosphocholine = a hepta-acyl lipid A + a 2-acyl-sn-glycero-3-phosphocholine. The catalysed reaction is a lipid IVA + a 1,2-diacyl-sn-glycero-3-phosphocholine = a lipid IVB + a 2-acyl-sn-glycero-3-phosphocholine. It carries out the reaction a lipid IIA + a 1,2-diacyl-sn-glycero-3-phosphocholine = a lipid IIB + a 2-acyl-sn-glycero-3-phosphocholine. Its function is as follows. Transfers a fatty acid residue from the sn-1 position of a phospholipid to the N-linked hydroxyfatty acid chain on the proximal unit of lipid A or its precursors. This chain is Lipid A acyltransferase PagP, found in Cronobacter turicensis (strain DSM 18703 / CCUG 55852 / LMG 23827 / z3032).